The following is a 291-amino-acid chain: Pituitary-specific positive transcription factor 1 (291 aa).

Positions 5-13 match the 9aaTAD motif; sequence PFTSTDTFI. Residues 124-198 form the POU-specific domain; the sequence is MDSPEIRELE…ILSKWLEEAE (75 aa). A DNA-binding region (homeobox) is located at residues 214-273; the sequence is KRKRRTTISIAAKDALERHFGEQNKPSSQEILRMAEELNLEKEVVRVWFCNRRQREKRVK.

It belongs to the POU transcription factor family. Class-1 subfamily. As to quaternary structure, interacts with PITX1. Interacts with LHX3. Interacts with ELK1.

It localises to the nucleus. Its function is as follows. Transcription factor involved in the specification of the lactotrope, somatotrope, and thyrotrope phenotypes in the developing anterior pituitary. Activates growth hormone and prolactin genes. Specifically binds to the consensus sequence 5'-TAAAT-3'. The sequence is that of Pituitary-specific positive transcription factor 1 (POU1F1) from Bos taurus (Bovine).